The primary structure comprises 194 residues: Pyridoxine/pyridoxamine 5'-phosphate oxidase (194 aa).

FMN is bound by residues 42 to 47 (RVVLLK), 57 to 58 (FT), Arg63, Lys64, and Gln86. Lys47 is a substrate binding site. Residues Tyr104, Arg108, and Ser112 each coordinate substrate. Residues 121–122 (QS) and Trp166 each bind FMN. A substrate-binding site is contributed by 172 to 174 (RIH). Arg176 serves as a coordination point for FMN.

The protein belongs to the pyridoxamine 5'-phosphate oxidase family. Homodimer. It depends on FMN as a cofactor.

It carries out the reaction pyridoxamine 5'-phosphate + O2 + H2O = pyridoxal 5'-phosphate + H2O2 + NH4(+). It catalyses the reaction pyridoxine 5'-phosphate + O2 = pyridoxal 5'-phosphate + H2O2. The protein operates within cofactor metabolism; pyridoxal 5'-phosphate salvage; pyridoxal 5'-phosphate from pyridoxamine 5'-phosphate: step 1/1. Its pathway is cofactor metabolism; pyridoxal 5'-phosphate salvage; pyridoxal 5'-phosphate from pyridoxine 5'-phosphate: step 1/1. Functionally, catalyzes the oxidation of either pyridoxine 5'-phosphate (PNP) or pyridoxamine 5'-phosphate (PMP) into pyridoxal 5'-phosphate (PLP). This Ehrlichia ruminantium (strain Welgevonden) protein is Pyridoxine/pyridoxamine 5'-phosphate oxidase.